The chain runs to 315 residues: Methionyl-tRNA formyltransferase (315 aa).

S113–P116 is a binding site for (6S)-5,6,7,8-tetrahydrofolate.

The protein belongs to the Fmt family.

It carries out the reaction L-methionyl-tRNA(fMet) + (6R)-10-formyltetrahydrofolate = N-formyl-L-methionyl-tRNA(fMet) + (6S)-5,6,7,8-tetrahydrofolate + H(+). Functionally, attaches a formyl group to the free amino group of methionyl-tRNA(fMet). The formyl group appears to play a dual role in the initiator identity of N-formylmethionyl-tRNA by promoting its recognition by IF2 and preventing the misappropriation of this tRNA by the elongation apparatus. The chain is Methionyl-tRNA formyltransferase from Shigella boydii serotype 4 (strain Sb227).